The primary structure comprises 71 residues: Small integral membrane protein 31 (71 aa).

Residues 8-28 (LEMAFILLAFVIFSLFTLASI) traverse the membrane as a helical segment. The segment at 31 to 71 (TPDDSNEEEEHEKKGREKKRKKSEKKKNCSEEEHRIEAVEL) is disordered. A compositionally biased stretch (basic residues) spans 46–55 (REKKRKKSEK). A compositionally biased stretch (basic and acidic residues) spans 56–71 (KKNCSEEEHRIEAVEL). Asn58 carries an N-linked (GlcNAc...) asparagine glycan.

The protein localises to the membrane. This is Small integral membrane protein 31 from Homo sapiens (Human).